A 193-amino-acid polypeptide reads, in one-letter code: Large ribosomal subunit protein eL19B (193 aa).

Residues 157-179 are disordered; sequence EQQDARRARAKAARQRRAKAVEE. The segment covering 164-174 has biased composition (basic residues); the sequence is ARAKAARQRRA.

The protein belongs to the eukaryotic ribosomal protein eL19 family. In terms of assembly, component of the large ribosomal subunit (LSU). Mature yeast ribosomes consist of a small (40S) and a large (60S) subunit. The 40S small subunit contains 1 molecule of ribosomal RNA (18S rRNA) and at least 33 different proteins. The large 60S subunit contains 3 rRNA molecules (25S, 5.8S and 5S rRNA) and at least 46 different proteins. eL19 lies in close proximity to the binding site for eukaryotic initiation factor eIF4G.

Its subcellular location is the cytoplasm. Functionally, component of the ribosome, a large ribonucleoprotein complex responsible for the synthesis of proteins in the cell. The small ribosomal subunit (SSU) binds messenger RNAs (mRNAs) and translates the encoded message by selecting cognate aminoacyl-transfer RNA (tRNA) molecules. The large subunit (LSU) contains the ribosomal catalytic site termed the peptidyl transferase center (PTC), which catalyzes the formation of peptide bonds, thereby polymerizing the amino acids delivered by tRNAs into a polypeptide chain. The nascent polypeptides leave the ribosome through a tunnel in the LSU and interact with protein factors that function in enzymatic processing, targeting, and the membrane insertion of nascent chains at the exit of the ribosomal tunnel. eL19 may play a role in the last stages of translation initiation, in particular subunit joining and shedding/releasing factors. The chain is Large ribosomal subunit protein eL19B (rpl1902) from Schizosaccharomyces pombe (strain 972 / ATCC 24843) (Fission yeast).